The chain runs to 119 residues: Large ribosomal subunit protein bL20 (119 aa).

It belongs to the bacterial ribosomal protein bL20 family. As to quaternary structure, part of the 50S ribosomal subunit.

Its function is as follows. Binds directly to 23S ribosomal RNA and is necessary for the in vitro assembly process of the 50S ribosomal subunit. It is not involved in the protein synthesizing functions of that subunit. In Bacillus subtilis (strain 168), this protein is Large ribosomal subunit protein bL20 (rplT).